A 514-amino-acid chain; its full sequence is Glucose-1-phosphate adenylyltransferase small subunit 2, chloroplastic/amyloplastic/cytosolic (514 aa).

The transit peptide at M1 to R64 directs the protein to the chloroplast. Residues R35–T74 form a disordered region. Residues G41–A52 show a composition bias toward low complexity.

It belongs to the bacterial/plant glucose-1-phosphate adenylyltransferase family. In terms of assembly, heterotetramer composed of two small and two large subunits. As to expression, expressed in leaves.

The protein localises to the plastid. It localises to the chloroplast. It is found in the amyloplast. The protein resides in the cytoplasm. Its subcellular location is the cytosol. It carries out the reaction alpha-D-glucose 1-phosphate + ATP + H(+) = ADP-alpha-D-glucose + diphosphate. Its pathway is glycan biosynthesis; starch biosynthesis. With respect to regulation, activated by 3'phosphoglycerate, inhibited by orthophosphate. Allosteric regulation. Inhibited by inorganic phosphate (Pi). Functionally, involved in synthesis of starch. Catalyzes the synthesis of ADP-glucose, a molecule that serves as an activated glycosyl donor for alpha-1,4-glucan synthesis. The chloroplastic isoform 1 is essential for starch synthesis in leaf chloroplasts and the cytosolic isoform 2 for synthesis in seed endosperm. This is Glucose-1-phosphate adenylyltransferase small subunit 2, chloroplastic/amyloplastic/cytosolic from Oryza sativa subsp. japonica (Rice).